The primary structure comprises 206 residues: Erythropoietin (206 aa).

A signal peptide spans 1–40 (MCEPAPPKPTQSAWHSFPECPALLLLLSLLLLPLGLPVLG). 2 disulfide bridges follow: Cys47-Cys201 and Cys69-Cys73. Asn64 carries N-linked (GlcNAc...) asparagine glycosylation. Asn78 and Asn123 each carry an N-linked (GlcNAc...) asparagine glycan.

This sequence belongs to the EPO/TPO family. In terms of tissue distribution, produced by kidney or liver of adult mammals and by liver of fetal or neonatal mammals.

The protein resides in the secreted. Functionally, hormone involved in the regulation of erythrocyte proliferation and differentiation and the maintenance of a physiological level of circulating erythrocyte mass. Binds to EPOR leading to EPOR dimerization and JAK2 activation thereby activating specific downstream effectors, including STAT1 and STAT3. This chain is Erythropoietin (EPO), found in Canis lupus familiaris (Dog).